Here is a 132-residue protein sequence, read N- to C-terminus: Small ribosomal subunit protein uS8 (132 aa).

Belongs to the universal ribosomal protein uS8 family. As to quaternary structure, part of the 30S ribosomal subunit. Contacts proteins S5 and S12.

In terms of biological role, one of the primary rRNA binding proteins, it binds directly to 16S rRNA central domain where it helps coordinate assembly of the platform of the 30S subunit. In Staphylococcus haemolyticus (strain JCSC1435), this protein is Small ribosomal subunit protein uS8.